We begin with the raw amino-acid sequence, 86 residues long: UPF0473 protein Clos_1662 (86 aa).

It belongs to the UPF0473 family.

This Alkaliphilus oremlandii (strain OhILAs) (Clostridium oremlandii (strain OhILAs)) protein is UPF0473 protein Clos_1662.